Here is a 396-residue protein sequence, read N- to C-terminus: NADH-quinone oxidoreductase subunit D (396 aa).

Belongs to the complex I 49 kDa subunit family. As to quaternary structure, NDH-1 is composed of 14 different subunits. Subunits NuoB, C, D, E, F, and G constitute the peripheral sector of the complex.

It localises to the cell inner membrane. The enzyme catalyses a quinone + NADH + 5 H(+)(in) = a quinol + NAD(+) + 4 H(+)(out). Its function is as follows. NDH-1 shuttles electrons from NADH, via FMN and iron-sulfur (Fe-S) centers, to quinones in the respiratory chain. The immediate electron acceptor for the enzyme in this species is believed to be ubiquinone. Couples the redox reaction to proton translocation (for every two electrons transferred, four hydrogen ions are translocated across the cytoplasmic membrane), and thus conserves the redox energy in a proton gradient. This Bartonella henselae (strain ATCC 49882 / DSM 28221 / CCUG 30454 / Houston 1) (Rochalimaea henselae) protein is NADH-quinone oxidoreductase subunit D.